A 735-amino-acid polypeptide reads, in one-letter code: MIP-related peptides (735 aa).

A signal peptide spans 1–20 (MCTRPGLAALLVLMTSCASS). Residues 21–135 (FSRADTQSAS…EDSDTKVDTR (115 aa)) constitute a propeptide that is removed on maturation. The span at 33–65 (ALSAASADAQAARQQQEQHLVAQQQQQQQQQQQ) shows a compositional bias: low complexity. Disordered regions lie at residues 33–212 (ALSA…FGKK) and 229–251 (FGKK…SRGS). 2 stretches are compositionally biased toward polar residues: residues 66–76 (HSNNNEPQQRA) and 101–125 (PVSQ…SGTP). Residues Phe142, Phe153, and Phe164 each carry the phenylalanine amide modification. Residues 142–159 (FGKKRGQAPRFFGKKRAM) show a composition bias toward basic residues. Residues 168 to 184 (SSEFPTSNSEQLALDTR) constitute a propeptide that is removed on maturation. Phe190 carries the phenylalanine amide modification. The propeptide occupies 194 to 203 (SFPESNREQR). Positions 194–204 (SFPESNREQRG) are enriched in basic and acidic residues. Residues Phe209 and Phe229 each carry the phenylalanine amide modification. Residues 214–229 (FDENVDIDERAAPRFF) constitute a propeptide, linker peptide. Positions 233–249 (SSGESAGDSGYISVASR) are excised as a propeptide. Residue Phe255 is modified to Phenylalanine amide. A propeptide spans 259–267 (QDDDIMIAA) (linker peptide). Residue Phe274 is modified to Phenylalanine amide. Positions 279-287 (SDDNVALDL) are cleaved as a propeptide — linker peptide. A Phenylalanine amide modification is found at Phe294. Positions 298 to 311 (QSSDLDDEISVALR) are excised as a propeptide. Phe317 bears the Phenylalanine amide mark. The propeptide occupies 321-332 (RADDEDILLGER). At Phe338 the chain carries Phenylalanine amide. The propeptide occupies 342–353 (RANDENISFSLR). 2 disordered regions span residues 352-373 (LRGS…DNIG) and 381-400 (RFFG…GLMA). Phe359 is modified (phenylalanine amide). Residues 363–377 (RSDESDDDNIGLVAR) constitute a propeptide that is removed on maturation. The residue at position 383 (Phe383) is a Phenylalanine amide. Positions 387 to 401 (RSDETDDENIGLMAR) are excised as a propeptide. Phe407 carries the phenylalanine amide modification. Residues 412-426 (SDGLDDGGNIIDVAT) constitute a propeptide, linker peptide. Residues 430–464 (PRFFGKKRSNSDSSDKSSDSALSSSESGRQTRQAP) form a disordered region. At Phe433 the chain carries Phenylalanine amide. The propeptide occupies 437–461 (RSNSDSSDKSSDSALSSSESGRQTR). The segment covering 438–447 (SNSDSSDKSS) has biased composition (basic and acidic residues). Gln462 is subject to Pyrrolidone carboxylic acid. Phe467 bears the Phenylalanine amide mark. Residues 471–493 (YVDEHHVSKRAAATAFPLIIEAR) constitute a propeptide that is removed on maturation. At Gln494 the chain carries Pyrrolidone carboxylic acid. The residue at position 499 (Phe499) is a Phenylalanine amide. Residues 503-509 (EYRYPPR) constitute a propeptide that is removed on maturation. Ile515 is modified (isoleucine amide). Residues 519-546 (FSLYRSPGKYSLSSPYMSAKEFKETFRR) constitute a propeptide that is removed on maturation. Met552 is modified (methionine amide). Positions 556 to 585 (TAELNEEGSDDFTNDDTDDENEYDETVLFK) are excised as a propeptide. Val592 is modified (valine amide). Leu601 carries the post-translational modification Leucine amide. Position 610 is an isoleucine amide (Ile610). Val619 carries the post-translational modification Valine amide. Isoleucine amide is present on Ile628. Residues 632 to 661 (DLDWYQKALCAEADILELDDCADFLGNDDV) constitute a propeptide, linker peptide. A Pyrrolidone carboxylic acid modification is found at Gln664. The residue at position 669 (Ile669) is an Isoleucine amide. The propeptide at 674 to 705 (GEDVSERDYAQLLEALSRLQAIKQIKARIQNE) is linker peptide. Val714 carries the post-translational modification Valine amide. A propeptide spanning residues 715-735 (GRRSEYNLGPFDEFVDESMER) is cleaved from the precursor.

As to expression, expressed in the CNS and peripheral tissues (the digestive tract, vasculature, and the reproductive organs).

The protein resides in the secreted. Has some structural and functional features similar to vertebrate opioid peptides. AMRPs are inhibitory on Aplysia esophagus, penis retractor muscle, and body wall muscle. This Aplysia californica (California sea hare) protein is MIP-related peptides (MRP).